Consider the following 367-residue polypeptide: 3-dehydroquinate synthase (367 aa).

Residues 69-74 (DGEAFK), 103-107 (GVIGD), 127-128 (TT), Lys-140, and Lys-149 contribute to the NAD(+) site. 3 residues coordinate Zn(2+): Glu-182, His-245, and His-262.

It belongs to the sugar phosphate cyclases superfamily. Dehydroquinate synthase family. It depends on NAD(+) as a cofactor. Co(2+) is required as a cofactor. Zn(2+) serves as cofactor.

It localises to the cytoplasm. The catalysed reaction is 7-phospho-2-dehydro-3-deoxy-D-arabino-heptonate = 3-dehydroquinate + phosphate. It participates in metabolic intermediate biosynthesis; chorismate biosynthesis; chorismate from D-erythrose 4-phosphate and phosphoenolpyruvate: step 2/7. Functionally, catalyzes the conversion of 3-deoxy-D-arabino-heptulosonate 7-phosphate (DAHP) to dehydroquinate (DHQ). The chain is 3-dehydroquinate synthase from Pseudomonas syringae pv. tomato (strain ATCC BAA-871 / DC3000).